The chain runs to 347 residues: Epimerase family protein SDR39U1 homolog, chloroplastic (347 aa).

The transit peptide at 1–37 directs the protein to the chloroplast; the sequence is MELLCSPTSLSSSFALSSALLVPRSFSMPGTRRFMVL. Residues 54 to 57, 76 to 77, 115 to 119, and Arg136 contribute to the NADP(+) site; these read TGFI, TR, and LAGLP.

Can form homodimers. In terms of tissue distribution, expressed in leaves, stems and flower buds.

The protein resides in the plastid. It is found in the chloroplast inner membrane. It localises to the chloroplast. Functionally, putative NADP-dependent oxidoreductase that acts as a positive regulator of chloroplast division. May play a role at an early stage of the division process. The sequence is that of Epimerase family protein SDR39U1 homolog, chloroplastic from Arabidopsis thaliana (Mouse-ear cress).